Reading from the N-terminus, the 497-residue chain is MTASAILACQKYPVTTIIGLEVHVQLKTQTKLFCGCTTEFGAPPNTQVCPVCLGMPGALPVMNREAIALSVKTGLALNCDIPPLTKWDRKQYFYPDLPKGYQISQFDLPICADGHLAISTDDGETERRIGLVRAHLEEDAGKSMHDEASGISDTKIDLNRCGTPLLEIVSQPDLRSADEAKAYLSELKLLLTHLKVSDCEMQEGSLRVDANVNLHIDVEGKKIATPIVEIKNLNSFRNVQRAIDYEVQRQLVDWEENRQTIDDAPKTTRGWDDSAEQTFAQREKEESADYRYFPDPDLLPVRLPREYVESISESLGELPAVTRERLQTQHGIKPYDADVIVNQGPDVIDYFETAVGASGDGRRTSSWMMQDVMRTMKERSIDIDAFPIPAERLGELIRMIADGKLDNNRARDVFEHLLTHDESIEQATKSLGIEAVDDDALESLCKELLAANPQVVEDVKGGKQQAVGALIGQAKKKNPNASPQAVRQLLIDLIAKM.

Belongs to the GatB/GatE family. GatB subfamily. In terms of assembly, heterotrimer of A, B and C subunits.

The catalysed reaction is L-glutamyl-tRNA(Gln) + L-glutamine + ATP + H2O = L-glutaminyl-tRNA(Gln) + L-glutamate + ADP + phosphate + H(+). It catalyses the reaction L-aspartyl-tRNA(Asn) + L-glutamine + ATP + H2O = L-asparaginyl-tRNA(Asn) + L-glutamate + ADP + phosphate + 2 H(+). Allows the formation of correctly charged Asn-tRNA(Asn) or Gln-tRNA(Gln) through the transamidation of misacylated Asp-tRNA(Asn) or Glu-tRNA(Gln) in organisms which lack either or both of asparaginyl-tRNA or glutaminyl-tRNA synthetases. The reaction takes place in the presence of glutamine and ATP through an activated phospho-Asp-tRNA(Asn) or phospho-Glu-tRNA(Gln). The sequence is that of Aspartyl/glutamyl-tRNA(Asn/Gln) amidotransferase subunit B from Rhodopirellula baltica (strain DSM 10527 / NCIMB 13988 / SH1).